A 554-amino-acid polypeptide reads, in one-letter code: MSEKYHSTVTRRDFMKRLGLAGAGAGALGAAVLAENNLPHEFKDVDDLLSAGKALEGDHANKVNNHPWWVTTRDHEDPTCNIDWSLIKRYSGWNNQGAYFLPEDYLSPTYTGRRHTIVDSKLEIELQGKKYRDSAFIKSGIDWMKENIDPDYDPGELGYGDRREDALIYAATNGSHNCWENPLYGRYEGSRPYLSMRTMNGINGLHEFGHADIKTTNYPKWEGTPEENLLIMRTAARYFGASSVGAIKITDNVKKIFYAKVQPFCLGPWYTITNMAEYIEYPVPVDNYAIPIVFEDIPADQGHYSYKRFGGDDKIAVPNALDNIFTYTIMLPEKRFKYAHSIPMDPCSCIAYPLFTEVEARIQQFIAGLGYNSMGGGVEAWGPGSAFGNLSGLGEQSRVSSIIEPRYGSNTKGSLRMLTDLPLAPTKPIDAGIREFCKTCGICAEHCPTQAISHEGPRYDSPHWDCVSGYEGWHLDYHKCINCTICEAVCPFFTMSNNSWVHNLVKSTVATTPVFNGFFKNMEGAFGYGPRYSPSRDEWWASENPIRGASVDIF.

The segment at residues Met-1 to Phe-42 is a signal peptide (tat-type signal). 4Fe-4S ferredoxin-type domains are found at residues Pro-425–Pro-457 and Glu-471–Trp-500. Cys-437, Cys-440, Cys-443, Cys-447, Cys-480, Cys-483, Cys-486, and Cys-490 together coordinate [4Fe-4S] cluster.

It belongs to the PceA family. The cofactor is [4Fe-4S] cluster. Requires corrinoid as cofactor. In terms of processing, predicted to be exported by the Tat system. The position of the signal peptide cleavage has been experimentally proven.

Its subcellular location is the cell membrane. It catalyses the reaction trichloroethene + AH2 = (Z)-1,2-dichloroethene + chloride + A + H(+). The enzyme catalyses (Z)-1,2-dichloroethene + AH2 = chloroethene + chloride + A + H(+). The catalysed reaction is 1,1-dichloroethene + AH2 = chloroethene + chloride + A + H(+). Loses 93% of its activity upon incubation with 1-iodopropane and titanium(III) citrate in the dark. Subsequent exposure to light restores 80% of the original activity. Completely inhibited by 2 mM sodium sulfite or sodium dithionite, and by 1 mM cuprous chloride. Functionally, catalyzes the reductive dechlorination of trichloroethene (TCE) to cis-1,2-dichloroethene (DCE) and of cis-1,2-dichloroethene to chloroethene. The substrate specificity is broad, and the enzyme can dehalogenate various substrates, including 1,1-dichloroethene (1,1-DCE), 1,2-dichloroethane and 1,2-dibromoethane. A variety of other haloalkanes and haloalkenes containing three to five carbon atoms are dehalogenated at lower rates. Trans-1,2-dichloroethene (trans-DCE) and chloroethene are degraded at rates which are approximately 2 orders of magnitude lower. Titanium(III) citrate and methyl viologen can be used as reductants. In Dehalococcoides mccartyi (strain ATCC BAA-2266 / KCTC 15142 / 195) (Dehalococcoides ethenogenes (strain 195)), this protein is Trichloroethene reductive dehalogenase.